The chain runs to 94 residues: DNA-directed RNA polymerase subunit omega (94 aa).

Belongs to the RNA polymerase subunit omega family. In terms of assembly, the RNAP catalytic core consists of 2 alpha, 1 beta, 1 beta' and 1 omega subunit. When a sigma factor is associated with the core the holoenzyme is formed, which can initiate transcription.

The enzyme catalyses RNA(n) + a ribonucleoside 5'-triphosphate = RNA(n+1) + diphosphate. Promotes RNA polymerase assembly. Latches the N- and C-terminal regions of the beta' subunit thereby facilitating its interaction with the beta and alpha subunits. This Bifidobacterium longum subsp. infantis (strain ATCC 15697 / DSM 20088 / JCM 1222 / NCTC 11817 / S12) protein is DNA-directed RNA polymerase subunit omega.